The chain runs to 502 residues: ATP synthase subunit alpha (502 aa).

Residues 117-139 (GMGPVLTSKTRPIESPAPGVMDR) form a disordered region. An ATP-binding site is contributed by 169 to 176 (GDRQTGKT).

The protein belongs to the ATPase alpha/beta chains family. In terms of assembly, F-type ATPases have 2 components, CF(1) - the catalytic core - and CF(0) - the membrane proton channel. CF(1) has five subunits: alpha(3), beta(3), gamma(1), delta(1), epsilon(1). CF(0) has three main subunits: a(1), b(2) and c(9-12). The alpha and beta chains form an alternating ring which encloses part of the gamma chain. CF(1) is attached to CF(0) by a central stalk formed by the gamma and epsilon chains, while a peripheral stalk is formed by the delta and b chains.

It localises to the cell membrane. The catalysed reaction is ATP + H2O + 4 H(+)(in) = ADP + phosphate + 5 H(+)(out). Functionally, produces ATP from ADP in the presence of a proton gradient across the membrane. The alpha chain is a regulatory subunit. This chain is ATP synthase subunit alpha, found in Bacillus licheniformis (strain ATCC 14580 / DSM 13 / JCM 2505 / CCUG 7422 / NBRC 12200 / NCIMB 9375 / NCTC 10341 / NRRL NRS-1264 / Gibson 46).